The following is a 1216-amino-acid chain: RAB11-binding protein RELCH (1216 aa).

The segment covering 1 to 13 has biased composition (gly residues); sequence MAAMAPGGGGSGS. 2 disordered regions span residues 1-67 and 133-179; these read MAAM…GSSA and NPGN…NRAG. The residue at position 2 (A2) is an N-acetylalanine. 2 positions are modified to phosphoserine: S20 and S22. Positions 21-31 are enriched in acidic residues; the sequence is DSDEDDDEVAA. T32 is subject to Phosphothreonine. Residues S54 and S56 each carry the phosphoserine modification. Residues 142–154 show a composition bias toward low complexity; the sequence is GTPPGMGAPGIPG. A phosphoserine mark is found at S180 and S182. T183 is modified (phosphothreonine). S186 carries the post-translational modification Phosphoserine. A coiled-coil region spans residues 197–231; sequence NRETDERVAVLEFELRKAKETIQALRANLTKAAEH. Positions 255–287 constitute a LisH domain; it reads EKRALNFLVNEFLLKNNYKLTSITFSDENDDQD. Positions 358–397 form a coiled coil; it reads LVQKLEDKISLLNNEKWSLMEQIRRLESEMDILKAEHFAT. Residue S385 is modified to Phosphoserine. The interval 409–473 is disordered; sequence VWSSQKDSED…ELPPSSVSNK (65 aa). The segment covering 429–440 has biased composition (basic and acidic residues); the sequence is DQEKTKDVHLEI. S453 is subject to Phosphoserine. An interaction with RAB11A and RAB11B region spans residues 497–779; sequence CRMSADSRLG…SSKAKLHGEV (283 aa). 2 HEAT repeats span residues 601–639 and 640–679; these read LLPQ…RSSL and VLSM…KYQQ. S792 carries the phosphoserine modification. One copy of the HEAT 3 repeat lies at 1004 to 1042; the sequence is VVPALITLSSDPEISVRIATIPAFGTIMETVIQRELLER. S1149 bears the Phosphoserine mark.

In terms of assembly, interacts with RAB11A (VIA-GTP form). Interacts with RAB11B. Interacts (via the third HEAT repeat) with OSBP (via C-terminus). Found in a complex composed of RELCH, OSBP1 and RAB11A.

The protein localises to the recycling endosome. Its subcellular location is the golgi apparatus. The protein resides in the trans-Golgi network. In terms of biological role, regulates intracellular cholesterol distribution from recycling endosomes to the trans-Golgi network through interactions with RAB11 and OSBP. Functions in membrane tethering and promotes OSBP-mediated cholesterol transfer between RAB11-bound recycling endosomes and OSBP-bound Golgi-like membranes. The polypeptide is RAB11-binding protein RELCH (Relch) (Mus musculus (Mouse)).